Reading from the N-terminus, the 78-residue chain is MSNIEQQVKKIIAEQLGVNEADVKNESSFQDDLGADSLDTVELVMALEEAFGCEIPDEDAEKITTVQLAIDYINAHNG.

One can recognise a Carrier domain in the interval 2–77 (SNIEQQVKKI…LAIDYINAHN (76 aa)). S37 bears the O-(pantetheine 4'-phosphoryl)serine mark.

This sequence belongs to the acyl carrier protein (ACP) family. In terms of processing, 4'-phosphopantetheine is transferred from CoA to a specific serine of apo-ACP by AcpS. This modification is essential for activity because fatty acids are bound in thioester linkage to the sulfhydryl of the prosthetic group.

Its subcellular location is the cytoplasm. It functions in the pathway lipid metabolism; fatty acid biosynthesis. Its function is as follows. Carrier of the growing fatty acid chain in fatty acid biosynthesis. This is Acyl carrier protein from Neisseria gonorrhoeae (strain ATCC 700825 / FA 1090).